The sequence spans 205 residues: MAAALFVLLGFALLGTHGASGAAGTVFTTVEDLGSKILLTCSLNDSATEVTGHRWLKGGVVLKEDALPGQKTEFKVDSDDQWGEYSCVFLPEPMGTANIQLHGPPRVKAVKSSEHINEGETAMLVCKSESVPPVTDWAWYKITDSEDKALMNGSESRFFVSSSQGRSELHIENLNMEADPGQYRCNGTSSKGSDQAIITLRVRSH.

Residues 1–18 (MAAALFVLLGFALLGTHG) form the signal peptide. An Ig-like C2-type domain is found at 19–103 (ASGAAGTVFT…MGTANIQLHG (85 aa)). Residues 19–205 (ASGAAGTVFT…AIITLRVRSH (187 aa)) are Extracellular-facing. Cystine bridges form between C41/C87 and C126/C185. Residues N44, N152, and N186 are each glycosylated (N-linked (GlcNAc...) asparagine). Positions 105–199 (PRVKAVKSSE…SKGSDQAIIT (95 aa)) constitute an Ig-like V-type domain.

In terms of assembly, homooligomer. Interacts with VEGFA, KDR/VEGFR2, PPIA/CYPA, SLC16A12, SLC16A11, ATP1B2, MAG, L1CAM and AJAP1. Interacts with SLC16A1; interaction mediates SLC16A1 targeting to the plasma membrane. Interacts with SLC16A3; interaction mediates SLC16A3 targeting to the plasma membrane. Interacts with PPIL2; regulates BSG transport to the cell membrane. Interacts with XKR8; promoting its localization at the cell membrane. Interacts with SLC16A6; this interaction mediates targeting to the plasma membrane.

The protein localises to the cell membrane. The protein resides in the endoplasmic reticulum membrane. It localises to the basolateral cell membrane. Signaling receptor for cyclophilins, essential for PPIA/CYPA and PPIB/CYPB-dependent signaling related to chemotaxis and adhesion of immune cells. Plays an important role in targeting the monocarboxylate transporters SLC16A1/GLUT1, SLC16A3, SLC16A8, SLC16A11 and SLC16A12 to the plasma membrane. Acts as a coreceptor for vascular endothelial growth factor receptor 2 (KDR/VEGFR2) in endothelial cells enhancing its VEGFA-mediated activation and downstream signaling. Promotes angiogenesis through EPAS1/HIF2A-mediated up-regulation of VEGFA and KDR/VEGFR2 in endothelial cells. This is Basigin (BSG) from Bos taurus (Bovine).